The sequence spans 139 residues: Large ribosomal subunit protein uL16 (139 aa).

Over residues 1–21 (MLSPRKTKFRKQHRGRMRGKA) the composition is skewed to basic residues. The interval 1 to 23 (MLSPRKTKFRKQHRGRMRGKATR) is disordered.

It belongs to the universal ribosomal protein uL16 family. Part of the 50S ribosomal subunit.

Its function is as follows. Binds 23S rRNA and is also seen to make contacts with the A and possibly P site tRNAs. The polypeptide is Large ribosomal subunit protein uL16 (Acaryochloris marina (strain MBIC 11017)).